A 434-amino-acid chain; its full sequence is Cysteine--tRNA ligase (434 aa).

A Zn(2+)-binding site is contributed by cysteine 28. A 'HIGH' region motif is present at residues 30 to 40 (PTVYDDIHIGN). Residues cysteine 207, histidine 232, and glutamate 236 each contribute to the Zn(2+) site. The short motif at 264 to 268 (KMSKS) is the 'KMSKS' region element. ATP is bound at residue lysine 267.

This sequence belongs to the class-I aminoacyl-tRNA synthetase family. Monomer. Zn(2+) is required as a cofactor.

The protein resides in the cytoplasm. The catalysed reaction is tRNA(Cys) + L-cysteine + ATP = L-cysteinyl-tRNA(Cys) + AMP + diphosphate. The polypeptide is Cysteine--tRNA ligase (Acholeplasma laidlawii (strain PG-8A)).